The sequence spans 466 residues: Delta-1 crystallin (466 aa).

Belongs to the lyase 1 family. Argininosuccinate lyase subfamily. As to quaternary structure, homotetramer. Eye lens.

Functionally, delta crystallin, the principal crystallin in embryonic lens, is found only in birds and reptiles. This is Delta-1 crystallin (ASL1) from Meleagris gallopavo (Wild turkey).